The sequence spans 196 residues: dTTP/UTP pyrophosphatase (196 aa).

The Proton acceptor role is filled by Asp76.

This sequence belongs to the Maf family. YhdE subfamily. A divalent metal cation is required as a cofactor.

It localises to the cytoplasm. It catalyses the reaction dTTP + H2O = dTMP + diphosphate + H(+). The catalysed reaction is UTP + H2O = UMP + diphosphate + H(+). In terms of biological role, nucleoside triphosphate pyrophosphatase that hydrolyzes dTTP and UTP. May have a dual role in cell division arrest and in preventing the incorporation of modified nucleotides into cellular nucleic acids. This is dTTP/UTP pyrophosphatase from Chlorobium chlorochromatii (strain CaD3).